The sequence spans 949 residues: AP-1 complex subunit beta-1 (949 aa).

Lys-318 is subject to N6-acetyllysine. 3'-nitrotyrosine is present on Tyr-574. A disordered region spans residues 584-625; that stretch reads GGRGVVHKSLPPRTASSESAESPETAPTGAPPGEQPDVIPAQ. A compositionally biased stretch (low complexity) spans 594-611; it reads PPRTASSESAESPETAPT.

The protein belongs to the adaptor complexes large subunit family. In terms of assembly, adaptor protein complex 1 (AP-1) is a heterotetramer composed of two large adaptins (gamma-type subunit AP1G1 and beta-type subunit AP1B1), a medium adaptin (mu-type subunit AP1M1 or AP1M2) and a small adaptin (sigma-type subunit AP1S1 or AP1S2 or AP1S3). As to expression, widely expressed.

The protein localises to the golgi apparatus. The protein resides in the cytoplasmic vesicle. Its subcellular location is the clathrin-coated vesicle membrane. Functionally, subunit of clathrin-associated adaptor protein complex 1 that plays a role in protein sorting in the late-Golgi/trans-Golgi network (TGN) and/or endosomes. The AP complexes mediate both the recruitment of clathrin to membranes and the recognition of sorting signals within the cytosolic tails of transmembrane cargo molecules. This Homo sapiens (Human) protein is AP-1 complex subunit beta-1 (AP1B1).